The following is a 246-amino-acid chain: tRNA (guanine-N(7)-)-methyltransferase (246 aa).

The S-adenosyl-L-methionine site is built by Glu77, Glu102, Asp129, and Asp152. Asp152 is a catalytic residue. Substrate-binding positions include Lys156, Asp188, and 225–228 (TKFE).

The protein belongs to the class I-like SAM-binding methyltransferase superfamily. TrmB family.

It catalyses the reaction guanosine(46) in tRNA + S-adenosyl-L-methionine = N(7)-methylguanosine(46) in tRNA + S-adenosyl-L-homocysteine. The protein operates within tRNA modification; N(7)-methylguanine-tRNA biosynthesis. In terms of biological role, catalyzes the formation of N(7)-methylguanine at position 46 (m7G46) in tRNA. This Haemophilus influenzae (strain PittEE) protein is tRNA (guanine-N(7)-)-methyltransferase.